We begin with the raw amino-acid sequence, 427 residues long: MSTISFFATSKRTSCDRCRKQKLRCPPDKDDMGTCGRCLRAGVACATSYTKPRGRSQKHGISTDGTSHVSGLDMQEPALPTPESVLSAGLTSSVQVAEDGSQLWSPLEEYNHLPSLSNFESGALSQSQDEDFAGLWWSPLHEDLDLDVHMDPSGACQNGYSAEISSFSRTDCSRQSNDCSPETLQHVECDMRLSQLNLELCRQSKAYHHWPNTTSDGSVRRPHFAIASALRDLLQNTEAFIHILHCLRNGTELNLDGRYQEPISTHDTGVSPPSLAFPSILNLTSCFFRIVDLFNVLLSSLALELATHSPLQRRSSSSSVTSALQILPDLKLAGLAVQEVSLQTKILVLTITHHFETMERLLGLPADLRVSECKDDNGYGLLGASWTSVLSSGRREKFELGWRRTGNWVTSIESLKANMGTLTKGSC.

The segment at residues 15 to 45 (CDRCRKQKLRCPPDKDDMGTCGRCLRAGVAC) is a DNA-binding region (zn(2)-C6 fungal-type). Residues 51-70 (KPRGRSQKHGISTDGTSHVS) are disordered. Residues 59 to 69 (HGISTDGTSHV) show a composition bias toward polar residues.

The protein resides in the nucleus. Transcription factor that regulates the expression of the gene cluster that mediates the biosynthesis of the phytotoxin stemphyloxin II. This is Stemphyloxin II biosynthesis cluster transcription factor sthR from Phaeosphaeria nodorum (strain SN15 / ATCC MYA-4574 / FGSC 10173) (Glume blotch fungus).